Consider the following 234-residue polypeptide: Ribose-5-phosphate isomerase A (234 aa).

Residues 39–42, 92–95, and 105–108 each bind substrate; these read TGST, DGAD, and KGGG. Glu114 serves as the catalytic Proton acceptor. Lys132 contacts substrate.

It belongs to the ribose 5-phosphate isomerase family. Homodimer.

The catalysed reaction is aldehydo-D-ribose 5-phosphate = D-ribulose 5-phosphate. It functions in the pathway carbohydrate degradation; pentose phosphate pathway; D-ribose 5-phosphate from D-ribulose 5-phosphate (non-oxidative stage): step 1/1. Functionally, catalyzes the reversible conversion of ribose-5-phosphate to ribulose 5-phosphate. In Albidiferax ferrireducens (strain ATCC BAA-621 / DSM 15236 / T118) (Rhodoferax ferrireducens), this protein is Ribose-5-phosphate isomerase A.